Here is a 201-residue protein sequence, read N- to C-terminus: Putative manganese efflux pump MntP 2 (201 aa).

6 helical membrane passes run 3–23 (LISV…VSIT), 39–59 (IGLF…SIGI), 65–85 (IAAL…GKMI), 116–136 (LILL…SFAF), 141–161 (IINT…IGVM), and 176–196 (ILGG…HTNI).

The protein belongs to the MntP (TC 9.B.29) family.

The protein resides in the cell membrane. Functionally, probably functions as a manganese efflux pump. The chain is Putative manganese efflux pump MntP 2 from Clostridium botulinum (strain Langeland / NCTC 10281 / Type F).